A 167-amino-acid chain; its full sequence is Iron-sulfur cluster assembly protein 1 (167 aa).

Residues 1–50 constitute a mitochondrion transit peptide; it reads MMLKQAAKKALGLTSRQSTPWSVGILRTYHENVIDHYDNPRNVGSFDKND.

The protein belongs to the NifU family. In terms of assembly, component of the core Fe-S cluster (ISC) assembly machinery. Interacts with HSCB. [2Fe-2S] cluster serves as cofactor. As to expression, expressed in roots, stems, leaves, flowers, pollen and siliques.

It is found in the mitochondrion matrix. The protein resides in the cytoplasm. It localises to the cytosol. Its pathway is cofactor biosynthesis; iron-sulfur cluster biosynthesis. Its function is as follows. Scaffold protein for the de novo synthesis of iron-sulfur (Fe-S) clusters within mitochondria, which is required for maturation of both mitochondrial and cytoplasmic [2Fe-2S] and [4Fe-4S] proteins. First, a [2Fe-2S] cluster is transiently assembled on the scaffold protein ISCU (ISU1, ISU2 or ISU3). In a second step, the cluster is released from ISCU, transferred to a glutaredoxin, followed by the formation of mitochondrial [2Fe-2S] proteins, the synthesis of [4Fe-4S] clusters and their target-specific insertion into the recipient apoproteins. Cluster assembly on ISCU depends on the function of the cysteine desulfurase complex NFS1-ISD11, which serves as the sulfur donor for cluster synthesis, the iron-binding protein frataxin as the putative iron donor, and the electron transfer chain comprised of ferredoxin reductase and ferredoxin, which receive their electrons from NADH. The sequence is that of Iron-sulfur cluster assembly protein 1 (ISU1) from Arabidopsis thaliana (Mouse-ear cress).